Consider the following 309-residue polypeptide: uncharacterized protein (309 aa).

Residues 9 to 55 form the RPE1 insert domain; sequence NFLYNIANKDGFKGYKECRTSAYKNVFDDSSTKSTSKFHLGISDTKN. The helical transmembrane segment at 62 to 82 threads the bilayer; it reads IIGLILIIFAGVLFYAYILQH.

Belongs to the LicD transferase family.

The protein resides in the membrane. This is an uncharacterized protein from Rickettsia typhi (strain ATCC VR-144 / Wilmington).